Here is a 218-residue protein sequence, read N- to C-terminus: Cytidylate kinase (218 aa).

Residue 11-19 (GPGASGKGT) participates in ATP binding.

Belongs to the cytidylate kinase family. Type 1 subfamily.

The protein resides in the cytoplasm. It carries out the reaction CMP + ATP = CDP + ADP. It catalyses the reaction dCMP + ATP = dCDP + ADP. This Neisseria meningitidis serogroup A / serotype 4A (strain DSM 15465 / Z2491) protein is Cytidylate kinase.